We begin with the raw amino-acid sequence, 118 residues long: MTETTENVVITIPDKTSFTFHEAATSPSEGEEFVVGHFRELTVKISGSSTSREIKFYAVDENGEKTALSGTNKTDFQLGSSTLNTNEYWDFDIAGLFKVMFEVVSVTGDVTVKGIVVS.

The polypeptide is SPbeta prophage-derived uncharacterized protein YomS (yomS) (Bacillus subtilis (strain 168)).